A 97-amino-acid chain; its full sequence is MAFFSSRVRALFILVLVLPLCSETGFARSKKTRKEPDCDVYRSHLFFCTREMDPICGTNGKSYANPCIFCSEKLGRNEKFDFGHWGHCREYTSAARS.

Residues 1 to 26 (MAFFSSRVRALFILVLVLPLCSETGF) form the signal peptide. Residues 32-90 (TRKEPDCDVYRSHLFFCTREMDPICGTNGKSYANPCIFCSEKLGRNEKFDFGHWGHCRE) form the Kazal-like domain. 3 disulfides stabilise this stretch: Cys-38-Cys-70, Cys-48-Cys-67, and Cys-56-Cys-88.

Seminal plasma.

It is found in the secreted. Its function is as follows. Inhibits acrosin. In Sus scrofa (Pig), this protein is Sperm-associated acrosin inhibitor.